A 560-amino-acid polypeptide reads, in one-letter code: MASRRLLASLLRQSAQRGGGLISRSLGNSIPKSASRASSRASPKGFLLNRAVQYATSAAAPASQPSTPPKSGSEPSGKITDEFTGAGSIGKVCQVIGAVVDVRFDEGLPPILTALEVLDNQIRLVLEVAQHLGENMVRTIAMDGTEGLVRGQRVLNTGSPITVPVGRATLGRIINVIGEAIDERGPITTDHFLPIHREAPAFVEQATEQQILVTGIKVVDLLAPYQRGGKIGLFGGAGVGKTVLIMELINNVAKAHGGFSVFAGVGERTREGNDLYREMIESGVIKLGEKQSESKCALVYGQMNEPPGARARVGLTGLTVAEHFRDAEGQDVLLFIDNIFRFTQANSEVSALLGRIPSAVGYQPTLATDLGGLQERITTTKKGSITSVQAIYVPADDLTDPAPATTFAHLDATTVLSRQISELGIYPAVDPLDSTSRMLSPHILGEDHYNTARGVQKVLQNYKNLQDIIAILGMDELSEDDKMTVARARKIQRFLSQPFHVAEVFTGAPGKYVDLKESINSFQGVLDGKYDDLSEQSFYMVGGIDEVIAKAEKIAKESAA.

Residues 1–54 (MASRRLLASLLRQSAQRGGGLISRSLGNSIPKSASRASSRASPKGFLLNRAVQY) constitute a mitochondrion transit peptide. Disordered regions lie at residues 20-44 (GLISRSLGNSIPKSASRASSRASPK) and 58-81 (AAAPASQPSTPPKSGSEPSGKITD). Composition is skewed to low complexity over residues 33–42 (SASRASSRAS) and 58–71 (AAAPASQPSTPPKS). 235–242 (GGAGVGKT) provides a ligand contact to ATP.

The protein belongs to the ATPase alpha/beta chains family. In terms of assembly, F-type ATPases have 2 components, CF(1) - the catalytic core - and CF(0) - the membrane proton channel. CF(1) has five subunits: alpha(3), beta(3), gamma(1), delta(1), epsilon(1). CF(0) has three main subunits: a, b and c.

It localises to the mitochondrion. The protein resides in the mitochondrion inner membrane. The enzyme catalyses ATP + H2O + 4 H(+)(in) = ADP + phosphate + 5 H(+)(out). Its function is as follows. Mitochondrial membrane ATP synthase (F(1)F(0) ATP synthase or Complex V) produces ATP from ADP in the presence of a proton gradient across the membrane which is generated by electron transport complexes of the respiratory chain. F-type ATPases consist of two structural domains, F(1) - containing the extramembraneous catalytic core, and F(0) - containing the membrane proton channel, linked together by a central stalk and a peripheral stalk. During catalysis, ATP synthesis in the catalytic domain of F(1) is coupled via a rotary mechanism of the central stalk subunits to proton translocation. Subunits alpha and beta form the catalytic core in F(1). Rotation of the central stalk against the surrounding alpha(3)beta(3) subunits leads to hydrolysis of ATP in three separate catalytic sites on the beta subunits. This is ATP synthase subunit beta, mitochondrial (ATPB) from Nicotiana plumbaginifolia (Leadwort-leaved tobacco).